A 226-amino-acid chain; its full sequence is GTP-binding nuclear protein Ran-3 (226 aa).

One can recognise a Small GTPase Ran-type domain in the interval 14–178 (GYPSFKLILV…LYLARKLTGD (165 aa)). A GTP-binding site is contributed by 25 to 32 (DGGTGKTT). The interval 44-52 (KRYEPTIGV) is switch-I. Residues Gly75, 129–132 (NKVD), and 157–159 (SAK) each bind GTP. The tract at residues 75 to 91 (GQEKFGGLRDGYYIHGH) is switch-II.

It belongs to the small GTPase superfamily. Ran family. As to quaternary structure, found in a nuclear export complex with RanGTP, exportin and pre-miRNA.

It is found in the nucleus. Its function is as follows. GTP-binding protein involved in nucleocytoplasmic transport. Required for the import of protein into the nucleus and also for RNA export. Involved in chromatin condensation and control of cell cycle. This chain is GTP-binding nuclear protein Ran-3 (RAN3), found in Oryza sativa subsp. indica (Rice).